The following is a 652-amino-acid chain: Bifunctional protein ThiO/ThiG (652 aa).

Positions 1-366 (MTRDIVIIGG…HYSRFQKQAS (366 aa)) are thiO. FAD contacts are provided by residues 5-19 (IVII…AIAV) and 44-46 (AGM). Glu52 serves as a coordination point for glycine. Val173 contacts FAD. Residues Arg301 and Arg327 each contribute to the glycine site. 325–331 (HYRNGIL) serves as a coordination point for FAD. A thiG region spans residues 393–652 (SLIIAGKSFH…ASSPVTGTIS (260 aa)). The active-site Schiff-base intermediate with DXP is the Lys494. Residues Gly555, 581-582 (AG), and 603-604 (NS) each bind 1-deoxy-D-xylulose 5-phosphate.

It in the N-terminal section; belongs to the DAO family. ThiO subfamily. This sequence in the C-terminal section; belongs to the ThiG family. Interacts with ThiH and ThiS. It depends on FAD as a cofactor.

It is found in the cytoplasm. The enzyme catalyses glycine + O2 + H2O = glyoxylate + H2O2 + NH4(+). It carries out the reaction [ThiS sulfur-carrier protein]-C-terminal-Gly-aminoethanethioate + 2-iminoacetate + 1-deoxy-D-xylulose 5-phosphate = [ThiS sulfur-carrier protein]-C-terminal Gly-Gly + 2-[(2R,5Z)-2-carboxy-4-methylthiazol-5(2H)-ylidene]ethyl phosphate + 2 H2O + H(+). It participates in cofactor biosynthesis; thiamine diphosphate biosynthesis. In terms of biological role, catalyzes the FAD-dependent oxidative deamination of glycine. Is essential for thiamine biosynthesis since the oxidation of glycine catalyzed by ThiO generates the glycine imine intermediate (dehydroglycine) required for the biosynthesis of the thiazole ring of thiamine pyrophosphate. Catalyzes the rearrangement of 1-deoxy-D-xylulose 5-phosphate (DXP) to produce the thiazole phosphate moiety of thiamine. Sulfur is provided by the thiocarboxylate moiety of the carrier protein ThiS. In vitro, sulfur can be provided by H(2)S. This chain is Bifunctional protein ThiO/ThiG (thiO/thiG), found in Trichormus variabilis (strain ATCC 29413 / PCC 7937) (Anabaena variabilis).